Here is a 492-residue protein sequence, read N- to C-terminus: Catalase isozyme 2 (492 aa).

Catalysis depends on residues H65 and N138. Residue Y347 participates in heme binding.

This sequence belongs to the catalase family. In terms of assembly, homotetramer. Heme serves as cofactor. High levels in green cotyledons, mature leaf, stem and green hypocotyl.

Its subcellular location is the peroxisome. The catalysed reaction is 2 H2O2 = O2 + 2 H2O. Occurs in almost all aerobically respiring organisms and serves to protect cells from the toxic effects of hydrogen peroxide. The chain is Catalase isozyme 2 (CAT2) from Cucurbita pepo (Vegetable marrow).